The sequence spans 825 residues: KH domain-containing protein YLL032C (825 aa).

Positions 482–556 constitute a KH domain; it reads PAEESFFIPE…ANICLAKNDL (75 aa). The segment covering 727 to 740 has biased composition (low complexity); the sequence is SSKSNTSNSNTNGN. Residues 727-766 are disordered; it reads SSKSNTSNSNTNGNFRSMNNAKSRTTIDNTSQSGASPQRH. Residues 741 to 762 show a composition bias toward polar residues; sequence FRSMNNAKSRTTIDNTSQSGAS. Serine 762 is subject to Phosphoserine.

The protein localises to the cytoplasm. The polypeptide is KH domain-containing protein YLL032C (Saccharomyces cerevisiae (strain ATCC 204508 / S288c) (Baker's yeast)).